We begin with the raw amino-acid sequence, 214 residues long: uncharacterized protein (214 aa).

2 consecutive CBS domains span residues 7–65 (MDKN…KKPI) and 69–129 (MRPV…EIPV).

This is an uncharacterized protein from Methanocaldococcus jannaschii (strain ATCC 43067 / DSM 2661 / JAL-1 / JCM 10045 / NBRC 100440) (Methanococcus jannaschii).